The primary structure comprises 88 residues: Small ribosomal subunit protein bS20 (88 aa).

It belongs to the bacterial ribosomal protein bS20 family.

Its function is as follows. Binds directly to 16S ribosomal RNA. The polypeptide is Small ribosomal subunit protein bS20 (Oenococcus oeni (strain ATCC BAA-331 / PSU-1)).